The chain runs to 304 residues: Acetylxylan esterase A (304 aa).

An N-terminal signal peptide occupies residues 1 to 19; the sequence is MVKLQYLLSILLYAYSCTA. Ser147 (charge relay system) is an active-site residue. N-linked (GlcNAc...) asparagine glycosylation is present at Asn189.

Belongs to the carbohydrate esterase 1 (CE1) family. AxeA subfamily. In terms of assembly, monomer.

Its subcellular location is the secreted. The enzyme catalyses Deacetylation of xylans and xylo-oligosaccharides.. Its pathway is glycan degradation; xylan degradation. Acetylxylan esterase involved in the hydrolysis of xylan, a major structural heterogeneous polysaccharide found in plant biomass representing the second most abundant polysaccharide in the biosphere, after cellulose. Degrades acetylated xylans by cleaving acetyl side groups from the hetero-xylan backbone. The sequence is that of Acetylxylan esterase A (axeA) from Emericella nidulans (strain FGSC A4 / ATCC 38163 / CBS 112.46 / NRRL 194 / M139) (Aspergillus nidulans).